Reading from the N-terminus, the 196-residue chain is Putative NADH dehydrogenase/NAD(P)H nitroreductase XCV0587 (196 aa).

This sequence belongs to the nitroreductase family. HadB/RutE subfamily. The cofactor is FMN.

The protein is Putative NADH dehydrogenase/NAD(P)H nitroreductase XCV0587 of Xanthomonas euvesicatoria pv. vesicatoria (strain 85-10) (Xanthomonas campestris pv. vesicatoria).